The primary structure comprises 572 residues: Proline--tRNA ligase (572 aa).

This sequence belongs to the class-II aminoacyl-tRNA synthetase family. ProS type 1 subfamily. Homodimer.

It localises to the cytoplasm. It carries out the reaction tRNA(Pro) + L-proline + ATP = L-prolyl-tRNA(Pro) + AMP + diphosphate. Functionally, catalyzes the attachment of proline to tRNA(Pro) in a two-step reaction: proline is first activated by ATP to form Pro-AMP and then transferred to the acceptor end of tRNA(Pro). As ProRS can inadvertently accommodate and process non-cognate amino acids such as alanine and cysteine, to avoid such errors it has two additional distinct editing activities against alanine. One activity is designated as 'pretransfer' editing and involves the tRNA(Pro)-independent hydrolysis of activated Ala-AMP. The other activity is designated 'posttransfer' editing and involves deacylation of mischarged Ala-tRNA(Pro). The misacylated Cys-tRNA(Pro) is not edited by ProRS. The sequence is that of Proline--tRNA ligase from Salmonella arizonae (strain ATCC BAA-731 / CDC346-86 / RSK2980).